We begin with the raw amino-acid sequence, 196 residues long: Beta-crystallin A4 (196 aa).

Thr2 bears the N-acetylthreonine mark. The tract at residues 2-11 (TLQCTKSAGH) is N-terminal arm. Beta/gamma crystallin 'Greek key' domains follow at residues 12-51 (WRMV…KVLS) and 52-98 (GAWV…RPVA). The connecting peptide stretch occupies residues 99–104 (CANHRD). Beta/gamma crystallin 'Greek key' domains are found at residues 105 to 146 (SRLT…HVQS) and 147 to 195 (GAWV…RRIQ).

This sequence belongs to the beta/gamma-crystallin family. Homo/heterodimer, or complexes of higher-order. The structure of beta-crystallin oligomers seems to be stabilized through interactions between the N-terminal arms.

Functionally, crystallins are the dominant structural components of the vertebrate eye lens. This Mus musculus (Mouse) protein is Beta-crystallin A4 (Cryba4).